The sequence spans 315 residues: Spermidine synthase 1 (315 aa).

Residues 25-262 (PGWFSEISPL…GMIGFMLCST (238 aa)) enclose the PABS domain. Residue glutamine 56 coordinates S-adenosyl 3-(methylsulfanyl)propylamine. Residue tyrosine 86 participates in putrescine binding. Residues glutamine 87, aspartate 111, glutamate 131, 162–163 (DG), and aspartate 181 contribute to the S-adenosyl 3-(methylsulfanyl)propylamine site. The Proton acceptor role is filled by aspartate 181. Putrescine contacts are provided by residues 181 to 184 (DSSD) and tyrosine 250.

The protein belongs to the spermidine/spermine synthase family.

It catalyses the reaction S-adenosyl 3-(methylsulfanyl)propylamine + putrescine = S-methyl-5'-thioadenosine + spermidine + H(+). It participates in amine and polyamine biosynthesis; spermidine biosynthesis; spermidine from putrescine: step 1/1. The protein is Spermidine synthase 1 of Hyoscyamus niger (Black henbane).